The primary structure comprises 127 residues: Large ribosomal subunit protein bL17 (127 aa).

It belongs to the bacterial ribosomal protein bL17 family. In terms of assembly, part of the 50S ribosomal subunit. Contacts protein L32.

This Pelobacter propionicus (strain DSM 2379 / NBRC 103807 / OttBd1) protein is Large ribosomal subunit protein bL17.